The primary structure comprises 143 residues: Large ribosomal subunit protein uL11 (143 aa).

This sequence belongs to the universal ribosomal protein uL11 family. As to quaternary structure, part of the ribosomal stalk of the 50S ribosomal subunit. Interacts with L10 and the large rRNA to form the base of the stalk. L10 forms an elongated spine to which L12 dimers bind in a sequential fashion forming a multimeric L10(L12)X complex. In terms of processing, one or more lysine residues are methylated.

Its function is as follows. Forms part of the ribosomal stalk which helps the ribosome interact with GTP-bound translation factors. In Caulobacter sp. (strain K31), this protein is Large ribosomal subunit protein uL11.